The following is a 455-amino-acid chain: Bifunctional protein GlmU (455 aa).

Residues 1 to 226 (MSLDIVILAA…AMEVQGANDR (226 aa)) form a pyrophosphorylase region. Residues 8-11 (LAAG), K22, Q73, 78-79 (GT), 99-101 (YGD), G136, E151, N166, and N224 each bind UDP-N-acetyl-alpha-D-glucosamine. D101 serves as a coordination point for Mg(2+). N224 provides a ligand contact to Mg(2+). The linker stretch occupies residues 227–247 (KQLSELERHYQLREARRLMAA). Residues 248 to 455 (GVTLRDPSRF…WKRPVKITKD (208 aa)) are N-acetyltransferase. Residues R330 and K348 each contribute to the UDP-N-acetyl-alpha-D-glucosamine site. H360 functions as the Proton acceptor in the catalytic mechanism. Positions 363 and 374 each coordinate UDP-N-acetyl-alpha-D-glucosamine. Acetyl-CoA is bound by residues A377, 383-384 (NY), S402, A420, and R437.

It in the N-terminal section; belongs to the N-acetylglucosamine-1-phosphate uridyltransferase family. In the C-terminal section; belongs to the transferase hexapeptide repeat family. In terms of assembly, homotrimer. Requires Mg(2+) as cofactor.

It is found in the cytoplasm. It catalyses the reaction alpha-D-glucosamine 1-phosphate + acetyl-CoA = N-acetyl-alpha-D-glucosamine 1-phosphate + CoA + H(+). The catalysed reaction is N-acetyl-alpha-D-glucosamine 1-phosphate + UTP + H(+) = UDP-N-acetyl-alpha-D-glucosamine + diphosphate. It participates in nucleotide-sugar biosynthesis; UDP-N-acetyl-alpha-D-glucosamine biosynthesis; N-acetyl-alpha-D-glucosamine 1-phosphate from alpha-D-glucosamine 6-phosphate (route II): step 2/2. It functions in the pathway nucleotide-sugar biosynthesis; UDP-N-acetyl-alpha-D-glucosamine biosynthesis; UDP-N-acetyl-alpha-D-glucosamine from N-acetyl-alpha-D-glucosamine 1-phosphate: step 1/1. The protein operates within bacterial outer membrane biogenesis; LPS lipid A biosynthesis. Catalyzes the last two sequential reactions in the de novo biosynthetic pathway for UDP-N-acetylglucosamine (UDP-GlcNAc). The C-terminal domain catalyzes the transfer of acetyl group from acetyl coenzyme A to glucosamine-1-phosphate (GlcN-1-P) to produce N-acetylglucosamine-1-phosphate (GlcNAc-1-P), which is converted into UDP-GlcNAc by the transfer of uridine 5-monophosphate (from uridine 5-triphosphate), a reaction catalyzed by the N-terminal domain. In Pseudomonas syringae pv. tomato (strain ATCC BAA-871 / DC3000), this protein is Bifunctional protein GlmU.